A 98-amino-acid polypeptide reads, in one-letter code: Small ribosomal subunit protein bS6 (98 aa).

This sequence belongs to the bacterial ribosomal protein bS6 family.

Binds together with bS18 to 16S ribosomal RNA. In Lactobacillus acidophilus (strain ATCC 700396 / NCK56 / N2 / NCFM), this protein is Small ribosomal subunit protein bS6.